Reading from the N-terminus, the 310-residue chain is Protease HtpX homolog (310 aa).

A run of 2 helical transmembrane segments spans residues asparagine 16 to isoleucine 36 and isoleucine 55 to isoleucine 75. Histidine 166 lines the Zn(2+) pocket. Residue glutamate 167 is part of the active site. Histidine 170 is a binding site for Zn(2+). 2 helical membrane-spanning segments follow: residues valine 182–glycine 202 and methionine 214–leucine 234. Residue glutamate 239 coordinates Zn(2+).

This sequence belongs to the peptidase M48B family. The cofactor is Zn(2+).

Its subcellular location is the cell inner membrane. The polypeptide is Protease HtpX homolog (Helicobacter pylori (strain J99 / ATCC 700824) (Campylobacter pylori J99)).